The following is a 148-amino-acid chain: Probable calcium-binding protein CML14 (148 aa).

3 EF-hand domains span residues 9–44, 80–115, and 116–148; these read DQVS…LGGN, PFDR…IGEK, and LQPS…MVAK. Asp22, Asp24, Asp26, Lys28, and Glu33 together coordinate Ca(2+).

Its function is as follows. Potential calcium sensor. The sequence is that of Probable calcium-binding protein CML14 (CML14) from Arabidopsis thaliana (Mouse-ear cress).